We begin with the raw amino-acid sequence, 388 residues long: MNLHEYQAKQLFSRYGLPAPAGFACSTPREAEEAASKIGQGPWVVKCQVHAGGRGKAGGVKVVNSKEEIRAFAEQWLGKRLVTYQTDANGQPVTQILVEAATDIAKELYLGAVVDRGTRRVVFMASTEGGVEIEKVAEETPELIHRAIIDPLTGPMPYQGRELAFKLGLKGKQVSQFAKIFMGLATIFLERDLALIEINPLVITKDDDLICLDGKLGVDSNALFRQPEMREMHDPSQEDPREAQAAQWELNYVALDGNIGCMVNGAGLAMGTMDIVKLHGGEPANFLDVGGGATKERVTEAFKIILSDENVSAVLVNIFGGIVRCDLIADGIIGAVEEVGVNVPVVVRLEGNNAELGTKKLADSGLNIIAAKSLTDAAKQVVAAAEAK.

Residues 9–244 form the ATP-grasp domain; sequence KQLFSRYGLP…PSQEDPREAQ (236 aa). ATP contacts are provided by residues Lys-46, 53–55, Glu-99, Thr-102, and Glu-107; that span reads GRG. Mg(2+) contacts are provided by Asn-199 and Asp-213. Substrate contacts are provided by residues Asn-264 and 321–323; that span reads GIV.

The protein belongs to the succinate/malate CoA ligase beta subunit family. In terms of assembly, heterotetramer of two alpha and two beta subunits. It depends on Mg(2+) as a cofactor.

The enzyme catalyses succinate + ATP + CoA = succinyl-CoA + ADP + phosphate. It catalyses the reaction GTP + succinate + CoA = succinyl-CoA + GDP + phosphate. The protein operates within carbohydrate metabolism; tricarboxylic acid cycle; succinate from succinyl-CoA (ligase route): step 1/1. Its function is as follows. Succinyl-CoA synthetase functions in the citric acid cycle (TCA), coupling the hydrolysis of succinyl-CoA to the synthesis of either ATP or GTP and thus represents the only step of substrate-level phosphorylation in the TCA. The beta subunit provides nucleotide specificity of the enzyme and binds the substrate succinate, while the binding sites for coenzyme A and phosphate are found in the alpha subunit. This Proteus mirabilis (strain HI4320) protein is Succinate--CoA ligase [ADP-forming] subunit beta.